Consider the following 123-residue polypeptide: EVKLVESGGGLVQPGGSLRLSCATSGFTFSAFYMEWVRQPPGKRLEWIAASRNKANDYTTEYSASVKGRFFVSRDTSQSILYLQMNALRAEDTAIYYCARDVYYGYDYWFDVWGAGTTVTVSS.

Residues 1–114 (EVKLVESGGG…GYDYWFDVWG (114 aa)) form the Ig-like domain.

In Mus musculus (Mouse), this protein is Ig heavy chain V region HPCG14.